The following is a 326-amino-acid chain: S-methyl-5'-thioadenosine phosphorylase (326 aa).

Phosphate-binding positions include S44, 86 to 87 (RH), and 119 to 120 (SA). M220 provides a ligand contact to substrate. Phosphate is bound at residue T221. 244–246 (DYD) is a substrate binding site.

This sequence belongs to the PNP/MTAP phosphorylase family. MTAP subfamily. In terms of assembly, homohexamer. Dimer of a homotrimer.

It catalyses the reaction S-methyl-5'-thioadenosine + phosphate = 5-(methylsulfanyl)-alpha-D-ribose 1-phosphate + adenine. It participates in amino-acid biosynthesis; L-methionine biosynthesis via salvage pathway; S-methyl-5-thio-alpha-D-ribose 1-phosphate from S-methyl-5'-thioadenosine (phosphorylase route): step 1/1. Its function is as follows. Catalyzes the reversible phosphorylation of S-methyl-5'-thioadenosine (MTA) to adenine and 5-methylthioribose-1-phosphate. Involved in the breakdown of MTA, a major by-product of polyamine biosynthesis. Responsible for the first step in the methionine salvage pathway after MTA has been generated from S-adenosylmethionine. Has broad substrate specificity with 6-aminopurine nucleosides as preferred substrates. The chain is S-methyl-5'-thioadenosine phosphorylase from Synechocystis sp. (strain PCC 6803 / GT-S).